A 168-amino-acid polypeptide reads, in one-letter code: Peptide deformylase (168 aa).

Residues cysteine 92 and histidine 134 each coordinate Fe cation. Residue glutamate 135 is part of the active site. Histidine 138 is a Fe cation binding site.

This sequence belongs to the polypeptide deformylase family. Fe(2+) serves as cofactor.

It carries out the reaction N-terminal N-formyl-L-methionyl-[peptide] + H2O = N-terminal L-methionyl-[peptide] + formate. Functionally, removes the formyl group from the N-terminal Met of newly synthesized proteins. Requires at least a dipeptide for an efficient rate of reaction. N-terminal L-methionine is a prerequisite for activity but the enzyme has broad specificity at other positions. This Hahella chejuensis (strain KCTC 2396) protein is Peptide deformylase.